The sequence spans 672 residues: DNA-directed RNA polymerase subunit gamma (672 aa).

Residues Cys70, Cys72, Cys85, and Cys88 each coordinate Zn(2+). Positions 466, 468, and 470 each coordinate Mg(2+).

It belongs to the RNA polymerase beta' chain family. RpoC1 subfamily. In terms of assembly, in cyanobacteria the RNAP catalytic core is composed of 2 alpha, 1 beta, 1 beta', 1 gamma and 1 omega subunit. When a sigma factor is associated with the core the holoenzyme is formed, which can initiate transcription. Requires Mg(2+) as cofactor. Zn(2+) is required as a cofactor.

The enzyme catalyses RNA(n) + a ribonucleoside 5'-triphosphate = RNA(n+1) + diphosphate. In terms of biological role, DNA-dependent RNA polymerase catalyzes the transcription of DNA into RNA using the four ribonucleoside triphosphates as substrates. The sequence is that of DNA-directed RNA polymerase subunit gamma from Trichodesmium erythraeum (strain IMS101).